The sequence spans 492 residues: Falcipain-3 (492 aa).

Residues 1 to 35 lie on the Cytoplasmic side of the membrane; it reads MEYHMEYSPNEVIKQEREVFVGKEKSGSKFKRKRS. Positions 1 to 242 are cleaved as a propeptide — activation peptide; it reads MEYHMEYSPN…LNLKTHGPFK (242 aa). The Bipartite vacuolar targeting signal 1 signature appears at 16–25; the sequence is EREVFVGKEK. Residues 36-56 traverse the membrane as a helical; Signal-anchor for type II membrane protein segment; it reads IFIVLTVSICFMFALMLFYFT. Over 57–492 the chain is Lumenal; sequence RNENNKTLFT…GTEAYVPLLE (436 aa). N-linked (GlcNAc...) asparagine glycosylation is present at Asn61. Residues 84-105 carry the Bipartite vacuolar targeting signal 2 motif; sequence KSESGKKFIVSKLEELISSYDK. Residue Asn129 is glycosylated (N-linked (GlcNAc...) asparagine). Residues 251-268 carry the Nose motif; required for the correct folding of the mature form motif; sequence EANYEDVIKKYKPADAKL. 4 cysteine pairs are disulfide-bonded: Cys290–Cys331, Cys324–Cys365, Cys350–Cys370, and Cys419–Cys480. Residue Cys293 is part of the active site. His425 is an active-site residue. An Arm motif; binds to host hemoglobin and required for the inhibitory interaction between the propeptide and the catalytic domain motif is present at residues 436 to 445; that stretch reads DIYNEDTGRM. Residue Asn455 is part of the active site.

The protein belongs to the peptidase C1 family. Post-translationally, auto-cleavage occurs at acidic pH. The proenzyme is the predominant form in late trophozoites and both the pro and mature enzyme are present in schizonts.

It is found in the membrane. The protein resides in the vacuole. Its subcellular location is the cytoplasmic vesicle membrane. Its activity is regulated as follows. Inhibited by cysteine protease inhibitor ICP. Its function is as follows. Cysteine protease which cleaves native host hemoglobin and globin in the food vacuole during the asexual blood stage. Preferentially cleaves substrates which have an arginine at the P1 position and a leucine at the P2 position. The protein is Falcipain-3 of Plasmodium falciparum (isolate 3D7).